The following is a 49-amino-acid chain: uncharacterized protein (49 aa).

A helical transmembrane segment spans residues 5–25 (LTTIFSVVIVLAIFLYFGLLI).

It belongs to the plectrovirus ORF12 protein family.

It localises to the host membrane. This is an uncharacterized protein from Spiroplasma virus SpV1-R8A2 B (SpV1).